A 335-amino-acid polypeptide reads, in one-letter code: RVS161-like protein RVS162 (335 aa).

A BAR domain is found at 17 to 310 (VMLKTGHIEQ…LDAQTRQDYI (294 aa)). A coiled-coil region spans residues 30–56 (KEYEFQEKRYRTMEENSIKLQKNLRLY). Residues 105-127 (HEEEGEEKEEEENDNTTTTTTTT) form a disordered region. Acidic residues predominate over residues 107-118 (EEGEEKEEEEND). Residues 222-259 (TNIIELNHNQYEEKLKIYNQELTEVESKYVEINNQLLI) are a coiled coil.

It is found in the cytoplasm. It localises to the cytoskeleton. Component of a cytoskeletal structure that is required for membrane curvature. In Candida albicans (strain SC5314 / ATCC MYA-2876) (Yeast), this protein is RVS161-like protein RVS162.